The chain runs to 547 residues: Chaperonin GroEL 2 (547 aa).

ATP-binding positions include 30–33 (TLGP), Lys-51, 87–91 (DGTTT), Gly-415, 479–481 (NAA), and Asp-495. The tract at residues 526 to 547 (KEESAAPAGGGMGGMGGMGGMM) is disordered. The segment covering 533–547 (AGGGMGGMGGMGGMM) has biased composition (gly residues).

It belongs to the chaperonin (HSP60) family. As to quaternary structure, forms a cylinder of 14 subunits composed of two heptameric rings stacked back-to-back. Interacts with the co-chaperonin GroES.

The protein resides in the cytoplasm. The catalysed reaction is ATP + H2O + a folded polypeptide = ADP + phosphate + an unfolded polypeptide.. Functionally, together with its co-chaperonin GroES, plays an essential role in assisting protein folding. The GroEL-GroES system forms a nano-cage that allows encapsulation of the non-native substrate proteins and provides a physical environment optimized to promote and accelerate protein folding. The chain is Chaperonin GroEL 2 from Anaeromyxobacter sp. (strain Fw109-5).